Reading from the N-terminus, the 281-residue chain is Protoheme IX farnesyltransferase (281 aa).

9 helical membrane-spanning segments follow: residues Val13–Val33, Leu38–Tyr58, Ala85–Gly105, Trp107–Leu127, Trp132–Met152, Ile161–Tyr181, Ile206–Met226, Ala227–Ile247, and Met261–Ile281.

The protein belongs to the UbiA prenyltransferase family. Protoheme IX farnesyltransferase subfamily.

The protein resides in the cell membrane. It carries out the reaction heme b + (2E,6E)-farnesyl diphosphate + H2O = Fe(II)-heme o + diphosphate. Its pathway is porphyrin-containing compound metabolism; heme O biosynthesis; heme O from protoheme: step 1/1. Converts heme B (protoheme IX) to heme O by substitution of the vinyl group on carbon 2 of heme B porphyrin ring with a hydroxyethyl farnesyl side group. The protein is Protoheme IX farnesyltransferase of Caldivirga maquilingensis (strain ATCC 700844 / DSM 13496 / JCM 10307 / IC-167).